Consider the following 154-residue polypeptide: Cindoxin (154 aa).

The region spanning 3–145 (ALILYGTETG…TAEEWAREIL (143 aa)) is the Flavodoxin-like domain. FMN-binding positions include 9–13 (TETGN) and 89–120 (VFGL…TQVG).

FMN serves as cofactor.

Its function is as follows. Involved in the degradation of cineol (eucalyptol). The FMN protein, cindoxin, shuttles electrons between the FAD-containing cindoxin reductase (CinB) and 1,8-cineole 2-endo-monooxygenase (CinA). This chain is Cindoxin (cinC), found in Citrobacter braakii.